The chain runs to 141 residues: Ribonuclease VapC16 (141 aa).

Position 99 (D99) interacts with Mg(2+). The segment at 99–141 is disordered; that stretch reads DHAHTAHRRASGSPSTSIRPCAHRPGTAAWPDDHHRRRPVSCL.

This sequence belongs to the PINc/VapC protein family. Mg(2+) serves as cofactor.

Its function is as follows. Toxic component of a type II toxin-antitoxin (TA) system. An RNase. The cognate antitoxin is VapB16. The chain is Ribonuclease VapC16 from Mycobacterium tuberculosis (strain ATCC 25618 / H37Rv).